A 316-amino-acid chain; its full sequence is Deoxyribonuclease-1-like 1 (316 aa).

Positions Met-1–Thr-28 are cleaved as a signal peptide. Active-site residues include Glu-107 and His-158. Cys-197 and Cys-234 are joined by a disulfide. A glycan (N-linked (GlcNAc...) asparagine) is linked at Asn-271.

Belongs to the DNase I family.

It is found in the endoplasmic reticulum. The chain is Deoxyribonuclease-1-like 1 (DNASE1L1) from Bos taurus (Bovine).